The chain runs to 133 residues: ATP synthase epsilon chain (133 aa).

The protein belongs to the ATPase epsilon chain family. In terms of assembly, F-type ATPases have 2 components, CF(1) - the catalytic core - and CF(0) - the membrane proton channel. CF(1) has five subunits: alpha(3), beta(3), gamma(1), delta(1), epsilon(1). CF(0) has three main subunits: a, b and c.

Its subcellular location is the cell membrane. Its function is as follows. Produces ATP from ADP in the presence of a proton gradient across the membrane. This Clostridium perfringens (strain ATCC 13124 / DSM 756 / JCM 1290 / NCIMB 6125 / NCTC 8237 / Type A) protein is ATP synthase epsilon chain.